We begin with the raw amino-acid sequence, 152 residues long: Aspartate carbamoyltransferase regulatory chain (152 aa).

Zn(2+)-binding residues include Cys-108, Cys-113, Cys-136, and Cys-139.

It belongs to the PyrI family. In terms of assembly, contains catalytic and regulatory chains. Zn(2+) is required as a cofactor.

Its function is as follows. Involved in allosteric regulation of aspartate carbamoyltransferase. The protein is Aspartate carbamoyltransferase regulatory chain of Thermococcus kodakarensis (strain ATCC BAA-918 / JCM 12380 / KOD1) (Pyrococcus kodakaraensis (strain KOD1)).